Here is a 386-residue protein sequence, read N- to C-terminus: Acetate kinase (386 aa).

A Mg(2+)-binding site is contributed by Asn-7. An ATP-binding site is contributed by Lys-14. Arg-78 provides a ligand contact to substrate. Catalysis depends on Asp-135, which acts as the Proton donor/acceptor. ATP contacts are provided by residues 195 to 199 (HLGNG), 268 to 270 (DMR), and 316 to 320 (GIGEN). Glu-370 serves as a coordination point for Mg(2+).

This sequence belongs to the acetokinase family. As to quaternary structure, homodimer. Mg(2+) is required as a cofactor. Mn(2+) serves as cofactor.

The protein resides in the cytoplasm. The enzyme catalyses acetate + ATP = acetyl phosphate + ADP. It functions in the pathway metabolic intermediate biosynthesis; acetyl-CoA biosynthesis; acetyl-CoA from acetate: step 1/2. Functionally, catalyzes the formation of acetyl phosphate from acetate and ATP. Can also catalyze the reverse reaction. The polypeptide is Acetate kinase (Arthrobacter sp. (strain FB24)).